The sequence spans 171 residues: NADH-quinone oxidoreductase subunit B (171 aa).

Residues cysteine 34, cysteine 35, cysteine 99, and cysteine 128 each coordinate [4Fe-4S] cluster.

It belongs to the complex I 20 kDa subunit family. NDH-1 is composed of 14 different subunits. Subunits NuoB, C, D, E, F, and G constitute the peripheral sector of the complex. [4Fe-4S] cluster is required as a cofactor.

It is found in the cell inner membrane. The catalysed reaction is a quinone + NADH + 5 H(+)(in) = a quinol + NAD(+) + 4 H(+)(out). Functionally, NDH-1 shuttles electrons from NADH, via FMN and iron-sulfur (Fe-S) centers, to quinones in the respiratory chain. The immediate electron acceptor for the enzyme in this species is believed to be ubiquinone. Couples the redox reaction to proton translocation (for every two electrons transferred, four hydrogen ions are translocated across the cytoplasmic membrane), and thus conserves the redox energy in a proton gradient. The protein is NADH-quinone oxidoreductase subunit B of Sulfurihydrogenibium sp. (strain YO3AOP1).